The primary structure comprises 380 residues: Cytochrome b (380 aa).

4 helical membrane passes run 34 to 54 (FGSL…LLAM), 78 to 99 (WLIR…FLHI), 114 to 134 (WNTG…GYVL), and 179 to 199 (FFAL…THLM). 2 residues coordinate heme b: histidine 84 and histidine 98. Heme b is bound by residues histidine 183 and histidine 197. Histidine 202 provides a ligand contact to a ubiquinone. 4 helical membrane-spanning segments follow: residues 227–247 (LKDI…ALFS), 289–309 (LGGV…PFLH), 321–341 (LSQT…WVGS), and 348–368 (FIII…ILFP).

This sequence belongs to the cytochrome b family. The cytochrome bc1 complex contains 11 subunits: 3 respiratory subunits (MT-CYB, CYC1 and UQCRFS1), 2 core proteins (UQCRC1 and UQCRC2) and 6 low-molecular weight proteins (UQCRH/QCR6, UQCRB/QCR7, UQCRQ/QCR8, UQCR10/QCR9, UQCR11/QCR10 and a cleavage product of UQCRFS1). This cytochrome bc1 complex then forms a dimer. It depends on heme b as a cofactor.

The protein localises to the mitochondrion inner membrane. Its function is as follows. Component of the ubiquinol-cytochrome c reductase complex (complex III or cytochrome b-c1 complex) that is part of the mitochondrial respiratory chain. The b-c1 complex mediates electron transfer from ubiquinol to cytochrome c. Contributes to the generation of a proton gradient across the mitochondrial membrane that is then used for ATP synthesis. This Tragopan satyra (Satyr tragopan) protein is Cytochrome b (MT-CYB).